The following is a 63-amino-acid chain: Large ribosomal subunit protein bL35 (63 aa).

Belongs to the bacterial ribosomal protein bL35 family.

This is Large ribosomal subunit protein bL35 from Campylobacter fetus subsp. fetus (strain 82-40).